A 592-amino-acid polypeptide reads, in one-letter code: Polyadenylate-binding protein, cytoplasmic and nuclear (592 aa).

Residues 1 to 10 (MSDITEKTAE) are compositionally biased toward basic and acidic residues. Residues 1-43 (MSDITEKTAEQLENLQINDDQQPAQSASAPSTSASESEASSVS) form a disordered region. Positions 11–20 (QLENLQINDD) are enriched in polar residues. Residues 21–43 (QQPAQSASAPSTSASESEASSVS) are compositionally biased toward low complexity. 4 consecutive RRM domains span residues 50–128 (ASLY…WSER), 138–215 (GNIF…MHVP), 231–308 (TNIY…RAQK), and 334–411 (VNLF…IAQR). The PABC domain occupies 507–586 (NQFPRHQQQH…ALAAYENFKK (80 aa)).

The protein belongs to the polyadenylate-binding protein type-1 family.

Its subcellular location is the cytoplasm. It is found in the nucleus. In terms of biological role, binds the poly(A) tail of mRNA. Appears to be an important mediator of the multiple roles of the poly(A) tail in mRNA biogenesis, stability and translation. In the nucleus, involved in both mRNA cleavage and polyadenylation. Is also required for efficient mRNA export to the cytoplasm. Acts in concert with a poly(A)-specific nuclease (PAN) to affect poly(A) tail shortening, which may occur concomitantly with either nucleocytoplasmic mRNA transport or translational initiation. In the cytoplasm, stimulates translation initiation and regulates mRNA decay through translation termination-coupled poly(A) shortening, probably mediated by PAN. The sequence is that of Polyadenylate-binding protein, cytoplasmic and nuclear (PAB1) from Kluyveromyces lactis (strain ATCC 8585 / CBS 2359 / DSM 70799 / NBRC 1267 / NRRL Y-1140 / WM37) (Yeast).